The primary structure comprises 489 residues: Serine/threonine-protein kinase dyf-5 (489 aa).

A Protein kinase domain is found at 11 to 291; it reads YLMTKRLGDG…ANQSLRYKYF (281 aa). ATP-binding positions include 17 to 25 and Lys-40; that span reads LGDGTFGEV. Asp-132 functions as the Proton acceptor in the catalytic mechanism. 2 disordered regions span residues 366–385 and 452–489; these read EKSD…KPTA and QTGP…KYVK. A compositionally biased stretch (low complexity) spans 458–473; sequence SNQTNNHSANNSHSPN.

This sequence belongs to the protein kinase superfamily. CMGC Ser/Thr protein kinase family. RCK subfamily. It depends on Mg(2+) as a cofactor. In terms of tissue distribution, expressed in head neurons including amphid and labial sensory neurons and 3 pairs of neurons in the tail including phasmid sensory neurons. In male, expressed in the tail including the sensory rays and the spicule.

It is found in the perikaryon. The protein resides in the cell projection. Its subcellular location is the dendrite. The protein localises to the axon. It localises to the cilium. The catalysed reaction is L-seryl-[protein] + ATP = O-phospho-L-seryl-[protein] + ADP + H(+). The enzyme catalyses L-threonyl-[protein] + ATP = O-phospho-L-threonyl-[protein] + ADP + H(+). Its function is as follows. Serine/threonine-protein kinase which is required for ciliogenesis. Regulates the length and the morphology of sensory neuron cilia. In addition, plays a role in the anterograde intraflagellar transport (IFT) in the cilia by regulating the undocking of kinesin-II motor complex (composed of klp-11, klp-20 and kap-1) before reaching the distal segment and the docking of kinesin motor osm-3 onto IFT cargos. The sequence is that of Serine/threonine-protein kinase dyf-5 from Caenorhabditis elegans.